Consider the following 475-residue polypeptide: Ribulose bisphosphate carboxylase large chain (475 aa).

A propeptide spanning residues 1-2 (MS) is cleaved from the precursor. Proline 3 bears the N-acetylproline mark. Lysine 14 is subject to N6,N6,N6-trimethyllysine. Residues asparagine 123 and threonine 173 each coordinate substrate. The active-site Proton acceptor is lysine 175. Residue lysine 177 coordinates substrate. Positions 201, 203, and 204 each coordinate Mg(2+). N6-carboxylysine is present on lysine 201. Histidine 294 (proton acceptor) is an active-site residue. Substrate-binding residues include arginine 295, histidine 327, and serine 379.

This sequence belongs to the RuBisCO large chain family. Type I subfamily. Heterohexadecamer of 8 large chains and 8 small chains; disulfide-linked. The disulfide link is formed within the large subunit homodimers. Requires Mg(2+) as cofactor. In terms of processing, the disulfide bond which can form in the large chain dimeric partners within the hexadecamer appears to be associated with oxidative stress and protein turnover.

The protein localises to the plastid. It is found in the chloroplast. The enzyme catalyses 2 (2R)-3-phosphoglycerate + 2 H(+) = D-ribulose 1,5-bisphosphate + CO2 + H2O. It catalyses the reaction D-ribulose 1,5-bisphosphate + O2 = 2-phosphoglycolate + (2R)-3-phosphoglycerate + 2 H(+). Its function is as follows. RuBisCO catalyzes two reactions: the carboxylation of D-ribulose 1,5-bisphosphate, the primary event in carbon dioxide fixation, as well as the oxidative fragmentation of the pentose substrate in the photorespiration process. Both reactions occur simultaneously and in competition at the same active site. This chain is Ribulose bisphosphate carboxylase large chain, found in Citrus sinensis (Sweet orange).